A 108-amino-acid polypeptide reads, in one-letter code: MLKASLLFFVTALAEIIGCFLPYLWLRKGASMWLLLPAAASLALFVWLLTLHPAASGRVYAAYGGVYVATALIWLRVVDDVKLSLFDWVGAAVALVGMLIIVAGWRVN.

Transmembrane regions (helical) follow at residues 6-26 (LLFF…YLWL), 29-49 (GASM…VWLL), 59-79 (VYAA…RVVD), and 85-105 (LFDW…VAGW).

The protein belongs to the UPF0060 family.

It localises to the cell inner membrane. The chain is UPF0060 membrane protein YE2027 from Yersinia enterocolitica serotype O:8 / biotype 1B (strain NCTC 13174 / 8081).